Consider the following 177-residue polypeptide: Archaemetzincin (177 aa).

Histidine 129 lines the Zn(2+) pocket. Residue glutamate 130 is the Proton acceptor of the active site. Zn(2+) is bound by residues histidine 133, histidine 139, cysteine 140, cysteine 145, cysteine 164, and cysteine 167.

It belongs to the peptidase M54 family. In terms of assembly, monomer. Zn(2+) is required as a cofactor.

Probable zinc metalloprotease whose natural substrate is unknown. The sequence is that of Archaemetzincin from Sulfolobus acidocaldarius (strain ATCC 33909 / DSM 639 / JCM 8929 / NBRC 15157 / NCIMB 11770).